An 809-amino-acid polypeptide reads, in one-letter code: Mediator of RNA polymerase II transcription subunit 15 (809 aa).

Disordered regions lie at residues 115–137 (AMQG…QMIQ), 183–211 (QLQQ…QQNQ), and 413–549 (GQMM…ASQS). The span at 119-128 (VAGGQQGAGA) shows a compositional bias: gly residues. Residues 446-467 (QQMPQAQQMMSSPSPVQVQTPQ) are compositionally biased toward low complexity. The segment covering 468–484 (SMPPPPQPQPSPQPPSS) has biased composition (pro residues). Low complexity-rich tracts occupy residues 485-502 (QPNS…GFQP) and 510-520 (QSPASSRTPQS). Residues 533-549 (TPGNPSSVMSPAGASQS) are compositionally biased toward polar residues.

It belongs to the Mediator complex subunit 15 family. As to quaternary structure, component of the Mediator complex. Interacts with srebf1 and srebf2. Interacts with smad2, smad3 and smad4.

Its subcellular location is the cytoplasm. The protein resides in the nucleus. Its function is as follows. Component of the Mediator complex, a coactivator involved in the regulated transcription of nearly all RNA polymerase II-dependent genes. Mediator functions as a bridge to convey information from gene-specific regulatory proteins to the basal RNA polymerase II transcription machinery. Mediator is recruited to promoters by direct interactions with regulatory proteins and serves as a scaffold for the assembly of a functional preinitiation complex with RNA polymerase II and the general transcription factors. Required for cholesterol-dependent gene regulation. Positively regulates the Nodal signaling pathway. This is Mediator of RNA polymerase II transcription subunit 15 (med15) from Danio rerio (Zebrafish).